We begin with the raw amino-acid sequence, 71 residues long: Beta-defensin 2 (71 aa).

The signal sequence occupies residues 1–20; it reads MRTLCSLLLICCLLFSYTTP. Cystine bridges form between C37/C66, C44/C59, and C49/C67.

The protein belongs to the beta-defensin family. Kidney, uterus and to a lesser extent in heart.

The protein resides in the secreted. Its function is as follows. Has bactericidal activity. This chain is Beta-defensin 2 (Defb2), found in Mus musculus (Mouse).